Reading from the N-terminus, the 109-residue chain is UPF0060 membrane protein RC1_3291 (109 aa).

The next 4 membrane-spanning stretches (helical) occupy residues 4–24, 31–51, 59–79, and 88–108; these read IATY…FWAW, PLWL…LTRI, AYAA…WLVE, and TLGT…PRGG.

Belongs to the UPF0060 family.

Its subcellular location is the cell inner membrane. The protein is UPF0060 membrane protein RC1_3291 of Rhodospirillum centenum (strain ATCC 51521 / SW).